The sequence spans 1637 residues: Serine/threonine-protein kinase Genghis Khan (1637 aa).

The Protein kinase domain maps to 100–369 (FDILKIIGRG…IQDFMDHPWF (270 aa)). Residues 106 to 114 (IGRGAFGEV) and K129 each bind ATP. The Proton acceptor role is filled by D224. Positions 370–440 (VGIDWKNIRQ…SLTSSSTLDS (71 aa)) constitute an AGC-kinase C-terminal domain. Coiled-coil stretches lie at residues 473 to 587 (VDSV…EDAV), 643 to 688 (SEKL…LKYT), and 839 to 881 (DELS…DLQK). The interval 538 to 575 (RNQKQKLSRQVRDKEEELDGAMQKNDSLRNELRKSDKT) is disordered. The span at 563 to 575 (DSLRNELRKSDKT) shows a compositional bias: basic and acidic residues. Residue T895 is modified to Phosphothreonine. The segment at 952 to 971 (NNKDHSSMKEASVSDLSREE) is disordered. A Phorbol-ester/DAG-type zinc finger spans residues 989–1039 (IHQFLVRTFSSPTKCNHCTSLMVGLTRQGVVCEICGFACHTICCQKVPTTC). Residues 1059–1177 (GTAYEGYVKV…WVIALGELHR (119 aa)) enclose the PH domain. The region spanning 1203–1489 (IRNALCSVII…LPLNNLGNVV (287 aa)) is the CNH domain. In terms of domain architecture, CRIB spans 1546 to 1559 (ISAPTNFNHISHMG). S1584 carries the phosphoserine modification. The interval 1611-1637 (DYGNDNIISRTPSPMASSFMDGLSNND) is disordered. The segment covering 1616–1626 (NIISRTPSPMA) has biased composition (polar residues).

This sequence belongs to the protein kinase superfamily. AGC Ser/Thr protein kinase family. DMPK subfamily. Interacts tightly with GTP-bound but not GDP-bound Cdc42.

It catalyses the reaction L-seryl-[protein] + ATP = O-phospho-L-seryl-[protein] + ADP + H(+). It carries out the reaction L-threonyl-[protein] + ATP = O-phospho-L-threonyl-[protein] + ADP + H(+). Functionally, acts as a downstream effector for the regulation of actin polymerization by Cdc42. This chain is Serine/threonine-protein kinase Genghis Khan (gek), found in Drosophila melanogaster (Fruit fly).